The chain runs to 131 residues: Small ribosomal subunit protein uS8 (131 aa).

It belongs to the universal ribosomal protein uS8 family. As to quaternary structure, part of the 30S ribosomal subunit. Contacts proteins S5 and S12.

In terms of biological role, one of the primary rRNA binding proteins, it binds directly to 16S rRNA central domain where it helps coordinate assembly of the platform of the 30S subunit. This chain is Small ribosomal subunit protein uS8, found in Paraburkholderia phymatum (strain DSM 17167 / CIP 108236 / LMG 21445 / STM815) (Burkholderia phymatum).